We begin with the raw amino-acid sequence, 157 residues long: 2-C-methyl-D-erythritol 2,4-cyclodiphosphate synthase (157 aa).

The a divalent metal cation site is built by D8 and H10. Residues 8–10 (DVH) and 34–35 (HS) contribute to the 4-CDP-2-C-methyl-D-erythritol 2-phosphate site. H42 contacts a divalent metal cation. Residues 56-58 (DIG), 61-65 (FPDTD), 100-106 (AQAPKMA), 132-135 (TTTE), F139, and R142 each bind 4-CDP-2-C-methyl-D-erythritol 2-phosphate.

It belongs to the IspF family. Homotrimer. The cofactor is a divalent metal cation.

It carries out the reaction 4-CDP-2-C-methyl-D-erythritol 2-phosphate = 2-C-methyl-D-erythritol 2,4-cyclic diphosphate + CMP. Its pathway is isoprenoid biosynthesis; isopentenyl diphosphate biosynthesis via DXP pathway; isopentenyl diphosphate from 1-deoxy-D-xylulose 5-phosphate: step 4/6. Its function is as follows. Involved in the biosynthesis of isopentenyl diphosphate (IPP) and dimethylallyl diphosphate (DMAPP), two major building blocks of isoprenoid compounds. Catalyzes the conversion of 4-diphosphocytidyl-2-C-methyl-D-erythritol 2-phosphate (CDP-ME2P) to 2-C-methyl-D-erythritol 2,4-cyclodiphosphate (ME-CPP) with a corresponding release of cytidine 5-monophosphate (CMP). The protein is 2-C-methyl-D-erythritol 2,4-cyclodiphosphate synthase of Azotobacter vinelandii (strain DJ / ATCC BAA-1303).